Reading from the N-terminus, the 352-residue chain is Sortase SrtE1 (352 aa).

2 stretches are compositionally biased toward basic and acidic residues: residues 1–10 (MTALRPERDS) and 34–45 (RYEESAAGEENR). Residues 1–132 (MTALRPERDS…RQARARKPGA (132 aa)) are disordered. Residues 1–139 (MTALRPERDS…PGAAVVASRA (139 aa)) lie on the Cytoplasmic side of the membrane. Residues 15-79 (DQGSSYGQPY…TGPIGGGPDG (65 aa)) are required for protein stability. A compositionally biased stretch (gly residues) spans 71-82 (GPIGGGPDGGGR). Residues 83–97 (AARRKAAKRRHGRRG) show a composition bias toward basic residues. The helical transmembrane segment at 140 to 160 (IGEIFITTGVLMLLFVTYQLW) threads the bilayer. The Extracellular segment spans residues 161–352 (WTNVRAHAQA…SKGKPDALVS (192 aa)). Active-site residues include histidine 251 and cysteine 320. Arginine 329 functions as the Proton donor in the catalytic mechanism.

This sequence belongs to the bacterial sortase family. Class E subfamily.

It localises to the cell membrane. The enzyme catalyses The enzyme catalyzes a cell wall sorting reaction in which a surface protein with a sorting signal containing a LPXTG motif is cleaved between the Thr and Gly residue. The resulting threonine carboxyl end of the protein is covalently attached to a pentaglycine cross-bridge of peptidoglycan.. In terms of biological role, transpeptidase that anchors surface proteins to the cell wall. Recognizes both Leu-Ala-x-Thr-Gly and Leu-Pro-x-Thr-Gly, with a preference for the former. Unlike the S.aureus sortase it cleaves not only the Thr-Gly motif but also the Ala-X bond; Ala-Glu and Ala-His bonds are better substrates than the Thr-Gly motif in vitro. Among its possible substrates are the chaplins ChpA, ChpB and ChpC; this enzyme is less important for ChpC attachment than is SrtE2. A double knockout mutant of srtE1 and srtE2 shows a developmental defect in aerial hyphae formation more dramatic than that due to chaplin deletion. The sequence is that of Sortase SrtE1 from Streptomyces coelicolor (strain ATCC BAA-471 / A3(2) / M145).